The following is a 396-amino-acid chain: Cytochrome b (396 aa).

The next 4 membrane-spanning stretches (helical) occupy residues 37 to 57 (FGSL…ILAM), 81 to 102 (WLMR…YAHI), 117 to 137 (WNVG…GYVL), and 182 to 202 (FFTF…IHIM). Heme b is bound by residues His87 and His101. 2 residues coordinate heme b: His186 and His200. His205 serves as a coordination point for a ubiquinone. Transmembrane regions (helical) follow at residues 230-250 (FKDI…SLLP), 292-312 (LGGV…PFTH), 324-344 (LAQV…WLGG), and 351-371 (FILM…LIFP).

The protein belongs to the cytochrome b family. In terms of assembly, the cytochrome bc1 complex contains 3 respiratory subunits (MT-CYB, CYC1 and UQCRFS1), 2 core proteins (UQCRC1 and UQCRC2) and probably 6 low-molecular weight proteins. Heme b is required as a cofactor.

It is found in the mitochondrion inner membrane. Component of the ubiquinol-cytochrome c reductase complex (complex III or cytochrome b-c1 complex) that is part of the mitochondrial respiratory chain. The b-c1 complex mediates electron transfer from ubiquinol to cytochrome c. Contributes to the generation of a proton gradient across the mitochondrial membrane that is then used for ATP synthesis. The polypeptide is Cytochrome b (mt-cyb) (Lampetra fluviatilis (European river lamprey)).